The sequence spans 232 residues: Large ribosomal subunit protein uL1 (232 aa).

It belongs to the universal ribosomal protein uL1 family. In terms of assembly, part of the 50S ribosomal subunit.

In terms of biological role, binds directly to 23S rRNA. The L1 stalk is quite mobile in the ribosome, and is involved in E site tRNA release. Its function is as follows. Protein L1 is also a translational repressor protein, it controls the translation of the L11 operon by binding to its mRNA. This chain is Large ribosomal subunit protein uL1, found in Christiangramia forsetii (strain DSM 17595 / CGMCC 1.15422 / KT0803) (Gramella forsetii).